The primary structure comprises 257 residues: Homeobox protein goosecoid (257 aa).

A DNA-binding region (homeobox) is located at residues 160–219; that stretch reads KRRHRTIFTDEQLEALENLFQETKYPDVGTREQLARKVHLREEKVEVWFKNRRAKWRRQK. The disordered stretch occupies residues 213–257; that stretch reads AKWRRQKRSSSEESENAEKWNKTSSSKASPEKREEEGKSDLDSDS. A compositionally biased stretch (basic and acidic residues) spans 241-257; that stretch reads SPEKREEEGKSDLDSDS.

The protein belongs to the paired homeobox family. Bicoid subfamily.

It localises to the nucleus. In terms of biological role, regulates chordin (CHRD). May play a role in spatial programing within discrete embryonic fields or lineage compartments during organogenesis. In concert with NKX3-2, plays a role in defining the structural components of the middle ear; required for the development of the entire tympanic ring. Probably involved in the regulatory networks that define neural crest cell fate specification and determine mesoderm cell lineages in mammals. In Pongo pygmaeus (Bornean orangutan), this protein is Homeobox protein goosecoid (GSC).